Here is a 388-residue protein sequence, read N- to C-terminus: Chalcone synthase D (388 aa).

C164 is an active-site residue.

It belongs to the thiolase-like superfamily. Chalcone/stilbene synthases family.

The enzyme catalyses (E)-4-coumaroyl-CoA + 3 malonyl-CoA + 3 H(+) = 2',4,4',6'-tetrahydroxychalcone + 3 CO2 + 4 CoA. It functions in the pathway secondary metabolite biosynthesis; flavonoid biosynthesis. In terms of biological role, the primary product of this enzyme is 4,2',4',6'-tetrahydroxychalcone (also termed naringenin-chalcone or chalcone) which can under specific conditions spontaneously isomerize into naringenin. This Ipomoea nil (Japanese morning glory) protein is Chalcone synthase D (CHSD).